A 437-amino-acid polypeptide reads, in one-letter code: La-related protein 7 homolog (437 aa).

The HTH La-type RNA-binding domain occupies 38-145; the sequence is SKSPSLTIPK…KRKKKFDNRT (108 aa). The xRRM domain maps to 279 to 397; it reads ELSQSCFLKI…QRSSIDEIKA (119 aa). The segment covering 417-427 has biased composition (basic residues); that stretch reads RRPVSKRKNKA. A disordered region spans residues 417-437; the sequence is RRPVSKRKNKAINKMSTEVKK.

This sequence belongs to the LARP7 family. Component of the telomerase holoenzyme complex composed minimally of the catalytic subunit p123 and the telomerase RNA template component. The mature form of the protein is a protein of 43 kDa, which is derived from a 51 kDa precursor by proteolytic cleavage.

It localises to the nucleus. Its subcellular location is the chromosome. The protein resides in the telomere. Functionally, RNA-binding protein required for assembly of the holoenzyme telomerase ribonucleoprotein (RNP) complex. Specifically binds telomerase RNA and promotes its assembly with catalytic subunit p123, thereby stimulating enzymatic activity and processivity of p123. Telomerase is a ribonucleoprotein enzyme essential that copies new telomeric repeats onto chromosome ends and functions to maintain cell division. The sequence is that of La-related protein 7 homolog from Euplotes aediculatus (Ciliate).